A 457-amino-acid chain; its full sequence is Adenylosuccinate synthetase isozyme 1 (457 aa).

Residues 1–25 (MSGTRASNDRPPSAGGVKRGRLQHE) are disordered. GTP contacts are provided by residues 42–48 (GDEGKGK) and 70–72 (GHT). Aspartate 43 functions as the Proton acceptor in the catalytic mechanism. Mg(2+) contacts are provided by aspartate 43 and glycine 70. Aspartate 43 contacts substrate. IMP is bound by residues 43–46 (DEGK), 68–71 (NAGH), threonine 163, arginine 177, asparagine 256, threonine 271, and arginine 335. Histidine 71 (proton donor) is an active-site residue. Residue 331 to 337 (VTTGRKR) coordinates substrate. GTP is bound by residues arginine 337, 363–365 (KLD), and 445–448 (GVGK).

This sequence belongs to the adenylosuccinate synthetase family. As to quaternary structure, homodimer. The cofactor is Mg(2+).

The protein resides in the cytoplasm. The catalysed reaction is IMP + L-aspartate + GTP = N(6)-(1,2-dicarboxyethyl)-AMP + GDP + phosphate + 2 H(+). It functions in the pathway purine metabolism; AMP biosynthesis via de novo pathway; AMP from IMP: step 1/2. Functionally, component of the purine nucleotide cycle (PNC), which interconverts IMP and AMP to regulate the nucleotide levels in various tissues, and which contributes to glycolysis and ammoniagenesis. Catalyzes the first committed step in the biosynthesis of AMP from IMP. The chain is Adenylosuccinate synthetase isozyme 1 from Bos taurus (Bovine).